The following is a 492-amino-acid chain: Glutamate--tRNA ligase (492 aa).

Residues 13 to 23 carry the 'HIGH' region motif; sequence PSPTGTPHVGM. The short motif at 257–261 is the 'KMSKS' region element; sequence KLSKR. K260 contributes to the ATP binding site.

Belongs to the class-I aminoacyl-tRNA synthetase family. Glutamate--tRNA ligase type 1 subfamily. In terms of assembly, monomer.

It is found in the cytoplasm. It catalyses the reaction tRNA(Glu) + L-glutamate + ATP = L-glutamyl-tRNA(Glu) + AMP + diphosphate. Functionally, catalyzes the attachment of glutamate to tRNA(Glu) in a two-step reaction: glutamate is first activated by ATP to form Glu-AMP and then transferred to the acceptor end of tRNA(Glu). The sequence is that of Glutamate--tRNA ligase from Mycolicibacterium paratuberculosis (strain ATCC BAA-968 / K-10) (Mycobacterium paratuberculosis).